We begin with the raw amino-acid sequence, 82 residues long: Large ribosomal subunit protein uL23 (82 aa).

The protein belongs to the universal ribosomal protein uL23 family. Part of the 50S ribosomal subunit. Contacts protein L29.

Functionally, binds to 23S rRNA. One of the proteins that surrounds the polypeptide exit tunnel on the outside of the ribosome. This chain is Large ribosomal subunit protein uL23, found in Methanosarcina mazei (strain ATCC BAA-159 / DSM 3647 / Goe1 / Go1 / JCM 11833 / OCM 88) (Methanosarcina frisia).